The chain runs to 100 residues: MKISEEEVRHVAALSKLSFSESETTEFATTLSKIVDMVELLNEVDTTGIAITTTMADKKNIMRADIAEAGVDRKFLFQNVPEKENHFIKVPAILDDGGDA.

This sequence belongs to the GatC family. In terms of assembly, heterotrimer of A, B and C subunits.

It carries out the reaction L-glutamyl-tRNA(Gln) + L-glutamine + ATP + H2O = L-glutaminyl-tRNA(Gln) + L-glutamate + ADP + phosphate + H(+). It catalyses the reaction L-aspartyl-tRNA(Asn) + L-glutamine + ATP + H2O = L-asparaginyl-tRNA(Asn) + L-glutamate + ADP + phosphate + 2 H(+). Its function is as follows. Allows the formation of correctly charged Asn-tRNA(Asn) or Gln-tRNA(Gln) through the transamidation of misacylated Asp-tRNA(Asn) or Glu-tRNA(Gln) in organisms which lack either or both of asparaginyl-tRNA or glutaminyl-tRNA synthetases. The reaction takes place in the presence of glutamine and ATP through an activated phospho-Asp-tRNA(Asn) or phospho-Glu-tRNA(Gln). The polypeptide is Aspartyl/glutamyl-tRNA(Asn/Gln) amidotransferase subunit C (Streptococcus equi subsp. zooepidemicus (strain MGCS10565)).